A 147-amino-acid polypeptide reads, in one-letter code: Microtubule-associated protein 1 light chain 3 gamma (147 aa).

Phosphoserine; by TBK1 is present on residues serine 93 and serine 96. Residue glycine 126 is the site of Phosphatidylethanolamine amidated glycine; alternate attachment. Glycine 126 is lipidated: Phosphatidylserine amidated glycine; alternate. A propeptide spans 127–147 (CLESAAPRDGSSLEDRPCNPL) (removed in mature form).

The protein belongs to the ATG8 family. 3 different light chains, LC1 (a cleavage product of MAP1B), LC2 (a cleavage product of MAP1A) and LC3 (produced by one of the MAP1LC3 genes), can associate with the MAP1A or MAP1B heavy chains. Interacts with TP53INP1 and TP53INP2. Interacts with CALCOCO2. Interacts with TECPR2. Interacts with TBC1D5. Found in a complex with UBQLN1 and UBQLN2. Interacts with UBQLN4 (via STI1 1 and 2 domains). Interacts with UBQLN1 in the presence of UBQLN4. Interacts with TRIM5. Interacts with ATG13. Interacts with MEFV and TRIM21. Interacts with WDR81; recruits MAP1LC3C to ubiquitinated protein aggregates in the aggrephagy process. Interacts with MOAP1 (via LIR motif). Interacts with reticulophagy regulators RETREG1, RETREG2 and RETREG3. Interacts with TAX1BP1. Interacts with IRGM. Interacts with SPART. In terms of processing, the precursor molecule is cleaved by ATG4 (ATG4A, ATG4B, ATG4C or ATG4D) to expose the glycine at the C-terminus and form the cytosolic form, LC3-I. The processed form is then activated by APG7L/ATG7, transferred to ATG3 and conjugated to phosphatidylethanolamine (PE) phospholipid to form the membrane-bound form, LC3-II. During non-canonical autophagy, the processed form is conjugated to phosphatidylserine (PS) phospholipid. ATG4 proteins also mediate the delipidation of PE-conjugated forms. In addition, ATG4B and ATG4D mediate delipidation of ATG8 proteins conjugated to PS during non-canonical autophagy. (Microbial infection) The Legionella effector RavZ is a deconjugating enzyme that hydrolyzes the amide bond between the C-terminal glycine residue and an adjacent aromatic residue in ATG8 proteins conjugated to phosphatidylethanolamine (PE), producing an ATG8 protein that is resistant to reconjugation by the host machinery due to the cleavage of the reactive C-terminal glycine. RavZ is also able to mediate delipidation of ATG8 proteins conjugated to phosphatidylserine (PS). Post-translationally, phosphorylation at Ser-96 and Ser-98 by TBK1 prevents interaction with ATG4 (ATG4A, ATG4B, ATG4C or ATG4D). Phosphorylation by TBK1 on autophagosomes prevents their delipidation by ATG4 and premature removal from nascent autophagosomes. As to expression, most abundant in placenta, lung and ovary.

The protein resides in the cytoplasmic vesicle. The protein localises to the autophagosome membrane. Its subcellular location is the endomembrane system. It is found in the cytoplasm. It localises to the cytoskeleton. Ubiquitin-like modifier that plays a crucial role in antibacterial autophagy (xenophagy) through the selective binding of CALCOCO2. Recruits all ATG8 family members to infecting bacteria such as S.typhimurium. May also play a role in aggrephagy, the macroautophagic degradation of ubiquitinated and aggregated proteins. The sequence is that of Microtubule-associated protein 1 light chain 3 gamma (MAP1LC3C) from Homo sapiens (Human).